Consider the following 333-residue polypeptide: Probable G-protein coupled receptor 33 (333 aa).

Over 1-30 the chain is Extracellular; the sequence is MDLINSTDYLINASTLVRNSTQFLAPASKM. Asn-5, Asn-12, and Asn-19 each carry an N-linked (GlcNAc...) asparagine glycan. A helical transmembrane segment spans residues 31-53; it reads IIALSLYISSIIGTITNGLYLWV. Topologically, residues 54-64 are cytoplasmic; that stretch reads LRFKMKQTVNT. Residues 65 to 86 traverse the membrane as a helical segment; sequence LLFFHLILSYFISTMILPFMAT. Residues 87–103 are Extracellular-facing; sequence SQLQDNHWNFGTALCKV. A disulfide bond links Cys-101 and Cys-179. The chain crosses the membrane as a helical span at residues 104 to 124; that stretch reads FNGTLSLGMFTSVFFLSAIGL. The Cytoplasmic portion of the chain corresponds to 125-143; it reads DRYLLTLHPVWSQQHRTPR. The chain crosses the membrane as a helical span at residues 144–165; the sequence is WASSIVLGVWISAAALSIPYLI. Topologically, residues 166–209 are extracellular; that stretch reads FRQTHHDRKGKVTCQNNYAVSTNWESKEMQALRQWIHVACFISR. The helical transmembrane segment at 210-230 threads the bilayer; it reads FLLGFLLPFFIIIFCYERVAS. Residues 231–246 lie on the Cytoplasmic side of the membrane; that stretch reads KVKERSLFKSSKPFKV. The chain crosses the membrane as a helical span at residues 247–268; the sequence is MMTAIISFFVCWMPYHIHQGLL. The Extracellular segment spans residues 269 to 283; that stretch reads LTTNQSLLLELTLIL. N-linked (GlcNAc...) asparagine glycosylation occurs at Asn-272. Residues 284–303 form a helical membrane-spanning segment; the sequence is TVLTTSFNTIFSPTLYLFVG. The Cytoplasmic portion of the chain corresponds to 304 to 333; that stretch reads ENFKKVFKKSILALFESTFSEDSSVERTQT.

The protein belongs to the G-protein coupled receptor 1 family.

It localises to the cell membrane. Orphan receptor; could be a chemoattractant receptor. In Pan troglodytes (Chimpanzee), this protein is Probable G-protein coupled receptor 33 (GPR33).